The sequence spans 267 residues: GTP cyclohydrolase FolE2 (267 aa).

The protein belongs to the GTP cyclohydrolase IV family.

The enzyme catalyses GTP + H2O = 7,8-dihydroneopterin 3'-triphosphate + formate + H(+). It participates in cofactor biosynthesis; 7,8-dihydroneopterin triphosphate biosynthesis; 7,8-dihydroneopterin triphosphate from GTP: step 1/1. Converts GTP to 7,8-dihydroneopterin triphosphate. This Cupriavidus necator (strain ATCC 17699 / DSM 428 / KCTC 22496 / NCIMB 10442 / H16 / Stanier 337) (Ralstonia eutropha) protein is GTP cyclohydrolase FolE2.